Here is a 244-residue protein sequence, read N- to C-terminus: Ubiquinone/menaquinone biosynthesis C-methyltransferase UbiE (244 aa).

Residues T70, D91, and 117–118 (DA) contribute to the S-adenosyl-L-methionine site.

Belongs to the class I-like SAM-binding methyltransferase superfamily. MenG/UbiE family.

The enzyme catalyses a 2-demethylmenaquinol + S-adenosyl-L-methionine = a menaquinol + S-adenosyl-L-homocysteine + H(+). It carries out the reaction a 2-methoxy-6-(all-trans-polyprenyl)benzene-1,4-diol + S-adenosyl-L-methionine = a 5-methoxy-2-methyl-3-(all-trans-polyprenyl)benzene-1,4-diol + S-adenosyl-L-homocysteine + H(+). It participates in quinol/quinone metabolism; menaquinone biosynthesis; menaquinol from 1,4-dihydroxy-2-naphthoate: step 2/2. The protein operates within cofactor biosynthesis; ubiquinone biosynthesis. Methyltransferase required for the conversion of demethylmenaquinol (DMKH2) to menaquinol (MKH2) and the conversion of 2-polyprenyl-6-methoxy-1,4-benzoquinol (DDMQH2) to 2-polyprenyl-3-methyl-6-methoxy-1,4-benzoquinol (DMQH2). The protein is Ubiquinone/menaquinone biosynthesis C-methyltransferase UbiE of Laribacter hongkongensis (strain HLHK9).